The following is a 428-amino-acid chain: Flotillin-2 (428 aa).

Glycine 2 carries the N-myristoyl glycine lipid modification. Cysteine 4 is lipidated: S-palmitoyl cysteine; by ZDHHC5. Cysteine 19 carries S-palmitoyl cysteine lipidation. Cysteine 20 carries S-palmitoyl cysteine; by ZDHHC5 lipidation. The residue at position 405 (serine 405) is a Phosphoserine.

Belongs to the band 7/mec-2 family. Flotillin subfamily. In terms of assembly, heterooligomeric complex of flotillin-1 and flotillin-2 and caveolin-1 and caveolin-2. Interacts with ECPAS. ZDHHC5-catalyzed palmitoylation may be required for the formation of higher-order complexes and for neurite outgrowth in cultured neural stem cells. Expressed in many tissues, including suprabasal epidermis, hair follicles, heart, lung, thymus, spleen, liver, kidney and brain. Not expressed in skeletal muscle.

The protein resides in the cell membrane. It localises to the membrane. The protein localises to the caveola. Its subcellular location is the endosome. Its function is as follows. May act as a scaffolding protein within caveolar membranes, functionally participating in formation of caveolae or caveolae-like vesicles. May be involved in epidermal cell adhesion and epidermal structure and function. The polypeptide is Flotillin-2 (Flot2) (Mus musculus (Mouse)).